A 277-amino-acid chain; its full sequence is Caspase-3 (277 aa).

Position 1 is an N-acetylmethionine (M1). Propeptides lie at residues M1–D9 and A10–D28. K11 is modified (N6-acetyllysine). A Phosphoserine modification is found at S26. Residues H121 and C163 contribute to the active site. Residue C163 is modified to S-nitrosocysteine; in inhibited form.

Belongs to the peptidase C14A family. As to quaternary structure, heterotetramer that consists of two anti-parallel arranged heterodimers, each one formed by a 17 kDa (p17) and a 12 kDa (p12) subunit. Interacts with BIRC6/bruce. Post-translationally, cleavage by granzyme B, caspase-6, caspase-8 and caspase-10 generates the two active subunits. Additional processing of the propeptides is likely due to the autocatalytic activity of the activated protease. Active heterodimers between the small subunit of caspase-7 protease and the large subunit of caspase-3 also occur and vice versa. In terms of processing, S-nitrosylated on its catalytic site cysteine in unstimulated cell lines and denitrosylated upon activation of the Fas apoptotic pathway, associated with an increase in intracellular caspase activity. Fas therefore activates caspase-3 not only by inducing the cleavage of the caspase zymogen to its active subunits, but also by stimulating the denitrosylation of its active site thiol. Ubiquitinated by BIRC6; this activity is inhibited by DIABLO/SMAC.

It localises to the cytoplasm. The enzyme catalyses Strict requirement for an Asp residue at positions P1 and P4. It has a preferred cleavage sequence of Asp-Xaa-Xaa-Asp-|- with a hydrophobic amino-acid residue at P2 and a hydrophilic amino-acid residue at P3, although Val or Ala are also accepted at this position.. Its activity is regulated as follows. Inhibited by BIRC6; following inhibition of BIRC6-caspase binding by DIABLO/SMAC, BIRC6 is subjected to caspase cleavage, leading to an increase in active caspases. Involved in the activation cascade of caspases responsible for apoptosis execution. At the onset of apoptosis, it proteolytically cleaves poly(ADP-ribose) polymerase PARP1 at a '216-Asp-|-Gly-217' bond. Cleaves and activates sterol regulatory element binding proteins (SREBPs) between the basic helix-loop-helix leucine zipper domain and the membrane attachment domain. Cleaves and activates caspase-6, -7 and -9 (CASP6, CASP7 and CASP9, respectively). Cleaves and inactivates interleukin-18 (IL18). Triggers cell adhesion in sympathetic neurons through RET cleavage. Cleaves IL-1 beta between an Asp and an Ala, releasing the mature cytokine which is involved in a variety of inflammatory processes. Cleaves and inhibits serine/threonine-protein kinase AKT1 in response to oxidative stress. Acts as an inhibitor of type I interferon production during virus-induced apoptosis by mediating cleavage of antiviral proteins CGAS, IRF3 and MAVS, thereby preventing cytokine overproduction. Also involved in pyroptosis by mediating cleavage and activation of gasdermin-E (GSDME). Cleaves XRCC4 and phospholipid scramblase proteins XKR4, XKR8 and XKR9, leading to promote phosphatidylserine exposure on apoptotic cell surface. Cleaves BIRC6 following inhibition of BIRC6-caspase binding by DIABLO/SMAC. This chain is Caspase-3 (CASP3), found in Oryctolagus cuniculus (Rabbit).